We begin with the raw amino-acid sequence, 557 residues long: Dihydroxy-acid dehydratase (557 aa).

Position 49 (Cys49) interacts with [2Fe-2S] cluster. Mg(2+) is bound at residue Asp81. Cys122 is a [2Fe-2S] cluster binding site. Residues Asp123 and Lys124 each coordinate Mg(2+). Position 124 is an N6-carboxylysine (Lys124). Position 194 (Cys194) interacts with [2Fe-2S] cluster. Glu446 is a Mg(2+) binding site. Ser472 acts as the Proton acceptor in catalysis.

Belongs to the IlvD/Edd family. In terms of assembly, homodimer. [2Fe-2S] cluster serves as cofactor. The cofactor is Mg(2+).

It carries out the reaction (2R)-2,3-dihydroxy-3-methylbutanoate = 3-methyl-2-oxobutanoate + H2O. It catalyses the reaction (2R,3R)-2,3-dihydroxy-3-methylpentanoate = (S)-3-methyl-2-oxopentanoate + H2O. Its pathway is amino-acid biosynthesis; L-isoleucine biosynthesis; L-isoleucine from 2-oxobutanoate: step 3/4. It participates in amino-acid biosynthesis; L-valine biosynthesis; L-valine from pyruvate: step 3/4. In terms of biological role, functions in the biosynthesis of branched-chain amino acids. Catalyzes the dehydration of (2R,3R)-2,3-dihydroxy-3-methylpentanoate (2,3-dihydroxy-3-methylvalerate) into 2-oxo-3-methylpentanoate (2-oxo-3-methylvalerate) and of (2R)-2,3-dihydroxy-3-methylbutanoate (2,3-dihydroxyisovalerate) into 2-oxo-3-methylbutanoate (2-oxoisovalerate), the penultimate precursor to L-isoleucine and L-valine, respectively. This chain is Dihydroxy-acid dehydratase, found in Prochlorococcus marinus (strain MIT 9312).